A 211-amino-acid polypeptide reads, in one-letter code: MSIMLKKWNELAEVKAELAARDWFFATSGNLSLKVTDAPLTFLVTASGKDKRKQTSEDFLLIDADGKPVEDTHLKPSAETLLHVEVYRRTNAGCVLHVHTVDNNIISDVYAQNREAVFSGQEIIKAFGIWEENAEVRIPIIDNYADIPTLANEFAKHIDGDTGAVLIQNHGITVWGRDAFEAKKHLEAWEFLFSWQVKRLLLQRAAVPLVD.

Positions 97 and 99 each coordinate Zn(2+).

The protein belongs to the aldolase class II family. MtnB subfamily. As to quaternary structure, homotetramer. The cofactor is Zn(2+).

The enzyme catalyses 5-(methylsulfanyl)-D-ribulose 1-phosphate = 5-methylsulfanyl-2,3-dioxopentyl phosphate + H2O. It functions in the pathway amino-acid biosynthesis; L-methionine biosynthesis via salvage pathway; L-methionine from S-methyl-5-thio-alpha-D-ribose 1-phosphate: step 2/6. Functionally, catalyzes the dehydration of methylthioribulose-1-phosphate (MTRu-1-P) into 2,3-diketo-5-methylthiopentyl-1-phosphate (DK-MTP-1-P). This chain is Methylthioribulose-1-phosphate dehydratase, found in Geobacillus thermodenitrificans (strain NG80-2).